The primary structure comprises 55 residues: UPF0434 protein BARBAKC583_1098 (55 aa).

The protein belongs to the UPF0434 family.

This Bartonella bacilliformis (strain ATCC 35685 / KC583 / Herrer 020/F12,63) protein is UPF0434 protein BARBAKC583_1098.